The primary structure comprises 286 residues: Polyamine aminopropyltransferase (286 aa).

The PABS domain occupies 5–238 (TMWHETLHDQ…GIMTFAWATD (234 aa)). An S-methyl-5'-thioadenosine-binding site is contributed by Gln-33. Residues His-64 and Asp-88 each contribute to the spermidine site. S-methyl-5'-thioadenosine contacts are provided by residues Glu-108 and 140–141 (DG). Asp-158 acts as the Proton acceptor in catalysis. Residue 158 to 161 (DCTD) coordinates spermidine. Pro-165 contributes to the S-methyl-5'-thioadenosine binding site.

It belongs to the spermidine/spermine synthase family. Homodimer or homotetramer.

It localises to the cytoplasm. The enzyme catalyses S-adenosyl 3-(methylsulfanyl)propylamine + putrescine = S-methyl-5'-thioadenosine + spermidine + H(+). The protein operates within amine and polyamine biosynthesis; spermidine biosynthesis; spermidine from putrescine: step 1/1. Its function is as follows. Catalyzes the irreversible transfer of a propylamine group from the amino donor S-adenosylmethioninamine (decarboxy-AdoMet) to putrescine (1,4-diaminobutane) to yield spermidine. This chain is Polyamine aminopropyltransferase, found in Salmonella schwarzengrund (strain CVM19633).